Here is a 156-residue protein sequence, read N- to C-terminus: ATP synthase subunit b (156 aa).

The chain crosses the membrane as a helical span at residues 5–25 (LTLIGQAIAFAFFVAFCMKFV).

It belongs to the ATPase B chain family. In terms of assembly, F-type ATPases have 2 components, F(1) - the catalytic core - and F(0) - the membrane proton channel. F(1) has five subunits: alpha(3), beta(3), gamma(1), delta(1), epsilon(1). F(0) has three main subunits: a(1), b(2) and c(10-14). The alpha and beta chains form an alternating ring which encloses part of the gamma chain. F(1) is attached to F(0) by a central stalk formed by the gamma and epsilon chains, while a peripheral stalk is formed by the delta and b chains.

The protein resides in the cell inner membrane. In terms of biological role, f(1)F(0) ATP synthase produces ATP from ADP in the presence of a proton or sodium gradient. F-type ATPases consist of two structural domains, F(1) containing the extramembraneous catalytic core and F(0) containing the membrane proton channel, linked together by a central stalk and a peripheral stalk. During catalysis, ATP synthesis in the catalytic domain of F(1) is coupled via a rotary mechanism of the central stalk subunits to proton translocation. Functionally, component of the F(0) channel, it forms part of the peripheral stalk, linking F(1) to F(0). In Acinetobacter baumannii (strain AYE), this protein is ATP synthase subunit b.